We begin with the raw amino-acid sequence, 447 residues long: Chordin-like protein 1 (447 aa).

Residues 1-22 (MDGMKYIISLFFIFVFLEGSKT) form the signal peptide. VWFC domains are found at residues 30–95 (TYCV…PRCP) and 108–174 (KSCE…RVCR). N-linked (GlcNAc...) asparagine glycosylation is present at Asn-113. Residues 174–176 (RGD) carry the Cell attachment site motif. A disordered region spans residues 200–224 (SYLRSPYDPPPNRQAGGLPRFPGSR). Residues 253-318 (QVCVSNGKTY…IDGKCCKVCP (66 aa)) form the VWFC 3 domain. N-linked (GlcNAc...) asparagine glycosylation occurs at Asn-286.

Post-translationally, may be glycosylated. In terms of tissue distribution, expressed in heart, brain, lung, liver, kidney and testis.

The protein resides in the secreted. Seems to antagonize the function of BMP4 by binding to it and preventing its interaction with receptors. Alters the fate commitment of neural stem cells from gliogenesis to neurogenesis. Contributes to neuronal differentiation of neural stem cells in the brain by preventing the adoption of a glial fate. May play a crucial role in dorsoventral axis formation. Antagonizes the function of BMP7 and may thus play an important role in the embryonic bone formation. Shows no inhibitory effect on the inducing activity of BMP2. Plays a role during anterior segment eye development. This is Chordin-like protein 1 (Chrdl1) from Mus musculus (Mouse).